The chain runs to 483 residues: Aspartyl/glutamyl-tRNA(Asn/Gln) amidotransferase subunit B (483 aa).

It belongs to the GatB/GatE family. GatB subfamily. As to quaternary structure, heterotrimer of A, B and C subunits.

It carries out the reaction L-glutamyl-tRNA(Gln) + L-glutamine + ATP + H2O = L-glutaminyl-tRNA(Gln) + L-glutamate + ADP + phosphate + H(+). The catalysed reaction is L-aspartyl-tRNA(Asn) + L-glutamine + ATP + H2O = L-asparaginyl-tRNA(Asn) + L-glutamate + ADP + phosphate + 2 H(+). Allows the formation of correctly charged Asn-tRNA(Asn) or Gln-tRNA(Gln) through the transamidation of misacylated Asp-tRNA(Asn) or Glu-tRNA(Gln) in organisms which lack either or both of asparaginyl-tRNA or glutaminyl-tRNA synthetases. The reaction takes place in the presence of glutamine and ATP through an activated phospho-Asp-tRNA(Asn) or phospho-Glu-tRNA(Gln). This chain is Aspartyl/glutamyl-tRNA(Asn/Gln) amidotransferase subunit B, found in Rickettsia africae (strain ESF-5).